The sequence spans 115 residues: Thionin-like protein 2 (115 aa).

Residues 1–20 (MLVAVMIVMVIGNLLAQTAA) form the signal peptide.

This sequence belongs to the plant thionin (TC 1.C.44) family. Post-translationally, is disulfide-linked.

It is found in the secreted. May be involved in plant defense. In Arabidopsis thaliana (Mouse-ear cress), this protein is Thionin-like protein 2.